Here is a 67-residue protein sequence, read N- to C-terminus: MATKETGGQKHATRRNQEVEEIEVTTETSVRNEKLAEDVDDILDEIDEVLESNAEDFVRQFVQKGGE.

Residues 1-26 form a disordered region; the sequence is MATKETGGQKHATRRNQEVEEIEVTT. Residues 23–61 form an ARC ATPase binding region; it reads EVTTETSVRNEKLAEDVDDILDEIDEVLESNAEDFVRQF. Positions 27–55 form a coiled coil; it reads ETSVRNEKLAEDVDDILDEIDEVLESNAE. E67 participates in a covalent cross-link: Isoglutamyl lysine isopeptide (Glu-Lys) (interchain with K-? in acceptor proteins).

This sequence belongs to the prokaryotic ubiquitin-like protein family. Strongly interacts with the proteasome-associated ATPase ARC through a hydrophobic interface; the interacting region of Pup lies in its C-terminal half. There is one Pup binding site per ARC hexamer ring.

It participates in protein degradation; proteasomal Pup-dependent pathway. Functionally, protein modifier that is covalently attached to lysine residues of substrate proteins, thereby targeting them for proteasomal degradation. The tagging system is termed pupylation. The polypeptide is Prokaryotic ubiquitin-like protein Pup (Thermobifida fusca (strain YX)).